The following is a 97-amino-acid chain: Class II hydrophobin A (97 aa).

The signal sequence occupies residues 1-15; the sequence is MKSVVFASLIASALA. 3 disulfide bridges follow: cysteine 30–cysteine 79, cysteine 40–cysteine 53, and cysteine 80–cysteine 91.

The protein belongs to the cerato-ulmin hydrophobin family.

It localises to the secreted. It is found in the cell wall. The protein resides in the vacuole. The protein localises to the cytoplasmic vesicle. Its function is as follows. Aerial growth, conidiation, and dispersal of filamentous fungi in the environment rely upon a capability of their secreting small amphipathic proteins called hydrophobins (HPBs) with low sequence identity. Class I can self-assemble into an outermost layer of rodlet bundles on aerial cell surfaces, conferring cellular hydrophobicity that supports fungal growth, development and dispersal; whereas Class II form highly ordered films at water-air interfaces through intermolecular interactions but contribute nothing to the rodlet structure. Hyd2A contributes to certain cell wall-related features, such as hydrophobicity but is not involved in cell wall-related events during fungal proliferation in host hemocoel. Does not contribute to conidial hydrophobicity. Involved in insect hemocoel colonization independent of cell hydrophobicity, as well as in the asexual development. This Beauveria bassiana (strain ARSEF 2860) (White muscardine disease fungus) protein is Class II hydrophobin A.